The following is a 195-amino-acid chain: Interferon tau-2 (195 aa).

The first 23 residues, 1–23 (MAFVLSLLMALVLVSYGPGGSLG), serve as a signal peptide directing secretion. Intrachain disulfides connect Cys24-Cys122 and Cys52-Cys162.

The protein belongs to the alpha/beta interferon family. IFN-alphaII subfamily. Constitutively and exclusively expressed in the mononuclear cells of the extraembryonic trophectoderm.

The protein localises to the secreted. Paracrine hormone primarily responsible for maternal recognition of pregnancy. Interacts with endometrial receptors, probably type I interferon receptors, and blocks estrogen receptor expression, preventing the estrogen-induced increase in oxytocin receptor expression in the endometrium. This results in the suppression of the pulsatile endometrial release of the luteolytic hormone prostaglandin F2-alpha, hindering the regression of the corpus luteum (luteolysis) and therefore a return to ovarian cyclicity. This, and a possible direct effect of IFN-tau on prostaglandin synthesis, leads in turn to continued ovarian progesterone secretion, which stimulates the secretion by the endometrium of the nutrients required for the growth of the conceptus. In summary, displays particularly high antiviral and antiproliferative potency concurrently with particular weak cytotoxicity, high antiluteolytic activity and immunomodulatory properties. In contrast with other IFNs, IFN-tau is not virally inducible. The protein is Interferon tau-2 (IFNT2) of Ovis aries (Sheep).